A 944-amino-acid chain; its full sequence is Serine/threonine-protein kinase ATG1 (944 aa).

The Protein kinase domain occupies 24–327; it reads FNIGSEIGKG…FENFFTHQVV (304 aa). ATP is bound by residues 30-38 and lysine 53; that span reads IGKGSFAQV. The active-site Proton acceptor is the aspartate 167. Positions 344–423 are disordered; it reads RQESRDPRSA…NSPREGGEGL (80 aa). The segment covering 356–367 has biased composition (low complexity); the sequence is SGSPSLSSRSPR. An LIR motif is present at residues 428 to 431; it reads PVAQ. 5 disordered regions span residues 443 to 475, 512 to 572, 777 to 801, 860 to 895, and 925 to 944; these read YDSVTGRNRASPPTSLLDQVRRNRALSNPPITE, LGDA…GSAS, QLPDDHPSHPSNHGTESIASSAGSP, EGSGSETRRLSTGKEAEREAVKEVSGGELDSDEEAH, and AVRRRSGDMTPRSVPSHASS. Polar residues-rich tracts occupy residues 447 to 459 and 516 to 549; these read TGRNRASPPTSLL and SQRSGPITRRYTQQGAPTSTTGAISTPYSRNALA. The span at 563-572 shows a compositional bias: low complexity; that stretch reads SLSASPGSAS. The segment covering 785 to 801 has biased composition (polar residues); that stretch reads HPSNHGTESIASSAGSP. Basic and acidic residues predominate over residues 865 to 881; sequence ETRRLSTGKEAEREAVK. The required for Cvt trafficking stretch occupies residues 924–930; the sequence is QAVRRRS.

This sequence belongs to the protein kinase superfamily. Ser/Thr protein kinase family. APG1/unc-51/ULK1 subfamily. In terms of assembly, homodimer. Dimerization requires the presence of ATG13. Forms a ternary complex with ATG13 and ATG17.

It localises to the cytoplasm. It is found in the preautophagosomal structure membrane. The catalysed reaction is L-seryl-[protein] + ATP = O-phospho-L-seryl-[protein] + ADP + H(+). It catalyses the reaction L-threonyl-[protein] + ATP = O-phospho-L-threonyl-[protein] + ADP + H(+). Its function is as follows. Serine/threonine protein kinase involved in the cytoplasm to vacuole transport (Cvt) and found to be essential in autophagy, where it is required for the formation of autophagosomes. Involved in the clearance of protein aggregates which cannot be efficiently cleared by the proteasome. Required for selective autophagic degradation of the nucleus (nucleophagy) as well as for mitophagy which contributes to regulate mitochondrial quantity and quality by eliminating the mitochondria to a basal level to fulfill cellular energy requirements and preventing excess ROS production. Also involved in endoplasmic reticulum-specific autophagic process, in selective removal of ER-associated degradation (ERAD) substrates. Plays a key role in ATG9 and ATG23 cycling through the pre-autophagosomal structure and is necessary to promote ATG18 binding to ATG9 through phosphorylation of ATG9. Catalyzes phosphorylation of ATG4, decreasing the interaction between ATG4 and ATG8 and impairing deconjugation of PE-conjugated forms of ATG8. Autophagy is required for proper vegetative growth, asexual/sexual reproduction, and full virulence. Autophagy is particularly involved in the biosynthesis of deoxynivalenol (DON), an important virulence determinant. The protein is Serine/threonine-protein kinase ATG1 of Gibberella zeae (strain ATCC MYA-4620 / CBS 123657 / FGSC 9075 / NRRL 31084 / PH-1) (Wheat head blight fungus).